A 445-amino-acid chain; its full sequence is N-succinylarginine dihydrolase (445 aa).

Substrate contacts are provided by residues 19 to 28 (AGLSFGNVAS), asparagine 110, and 137 to 138 (HR). The active site involves glutamate 174. Position 214 (arginine 214) interacts with substrate. Histidine 250 is a catalytic residue. The substrate site is built by aspartate 252 and asparagine 363. Residue cysteine 369 is the Nucleophile of the active site.

This sequence belongs to the succinylarginine dihydrolase family. Homodimer.

The catalysed reaction is N(2)-succinyl-L-arginine + 2 H2O + 2 H(+) = N(2)-succinyl-L-ornithine + 2 NH4(+) + CO2. Its pathway is amino-acid degradation; L-arginine degradation via AST pathway; L-glutamate and succinate from L-arginine: step 2/5. Catalyzes the hydrolysis of N(2)-succinylarginine into N(2)-succinylornithine, ammonia and CO(2). The protein is N-succinylarginine dihydrolase of Shewanella pealeana (strain ATCC 700345 / ANG-SQ1).